A 252-amino-acid polypeptide reads, in one-letter code: Ribonuclease HII (252 aa).

Positions 41–232 (LLVAGVDEAG…VRLALEGREQ (192 aa)) constitute an RNase H type-2 domain. 3 residues coordinate a divalent metal cation: Asp-47, Glu-48, and Asp-140.

The protein belongs to the RNase HII family. Requires Mn(2+) as cofactor. Mg(2+) serves as cofactor.

The protein resides in the cytoplasm. The enzyme catalyses Endonucleolytic cleavage to 5'-phosphomonoester.. Its function is as follows. Endonuclease that specifically degrades the RNA of RNA-DNA hybrids. This Xanthomonas oryzae pv. oryzae (strain KACC10331 / KXO85) protein is Ribonuclease HII.